We begin with the raw amino-acid sequence, 486 residues long: Ribulose bisphosphate carboxylase large chain (486 aa).

Positions 125 and 175 each coordinate substrate. Lys-177 serves as the catalytic Proton acceptor. Residue Lys-179 coordinates substrate. The Mg(2+) site is built by Lys-203, Asp-205, and Glu-206. Lys-203 carries the post-translational modification N6-carboxylysine. The active-site Proton acceptor is the His-295. Substrate contacts are provided by Arg-296, His-328, and Ser-380.

Belongs to the RuBisCO large chain family. Type I subfamily. Heterohexadecamer of 8 large chains and 8 small chains. Mg(2+) serves as cofactor.

The enzyme catalyses 2 (2R)-3-phosphoglycerate + 2 H(+) = D-ribulose 1,5-bisphosphate + CO2 + H2O. The catalysed reaction is D-ribulose 1,5-bisphosphate + O2 = 2-phosphoglycolate + (2R)-3-phosphoglycerate + 2 H(+). RuBisCO catalyzes two reactions: the carboxylation of D-ribulose 1,5-bisphosphate, the primary event in carbon dioxide fixation, as well as the oxidative fragmentation of the pentose substrate. Both reactions occur simultaneously and in competition at the same active site. The polypeptide is Ribulose bisphosphate carboxylase large chain (Aurantimonas manganoxydans (strain ATCC BAA-1229 / DSM 21871 / SI85-9A1)).